The following is a 631-amino-acid chain: 1-deoxy-D-xylulose-5-phosphate synthase (631 aa).

Residues histidine 78 and 119–121 contribute to the thiamine diphosphate site; that span reads AHS. Residue aspartate 150 participates in Mg(2+) binding. Thiamine diphosphate contacts are provided by residues 151–152, asparagine 179, tyrosine 286, and glutamate 368; that span reads GA. Asparagine 179 is a binding site for Mg(2+).

It belongs to the transketolase family. DXPS subfamily. Homodimer. The cofactor is Mg(2+). Requires thiamine diphosphate as cofactor.

It carries out the reaction D-glyceraldehyde 3-phosphate + pyruvate + H(+) = 1-deoxy-D-xylulose 5-phosphate + CO2. Its pathway is metabolic intermediate biosynthesis; 1-deoxy-D-xylulose 5-phosphate biosynthesis; 1-deoxy-D-xylulose 5-phosphate from D-glyceraldehyde 3-phosphate and pyruvate: step 1/1. In terms of biological role, catalyzes the acyloin condensation reaction between C atoms 2 and 3 of pyruvate and glyceraldehyde 3-phosphate to yield 1-deoxy-D-xylulose-5-phosphate (DXP). This chain is 1-deoxy-D-xylulose-5-phosphate synthase, found in Verminephrobacter eiseniae (strain EF01-2).